The chain runs to 485 residues: MMHFKSGLELTELQNMTVPEDDNVSNDSNDFTEVENGQINSKFISDRESRRSLTNSHLEKRKCDEYIPGTTSLGMSVFNLSNAIMGSGILGLAFALANTGILLFLILLTSVTLLSIYSINLLLICSKETGCMVYEKLGEQVFGTTGKLVIFGATSLQNTGAMLSYLFIVKNELPSAIKSLMGEEETFSAWYVDGRVLVVMVTFGIILPLCLLKNLGYLGYTSGFSLSCMVFFLIVVIYKKFQIPCMNGEQNSTVSANVTDACTPKYVTFNSKTVYALPTIAFAFVCHPSVLPIYSELKDRSQKKMQMVSNISFFAMFVMYFLTAIFGYLTFYEKVQSDLLHKYQSTGDILILTVRLAVIVAVILTVPVLFFTVRSSLFELAKKTKFHLCRHVLVTIILLVIINLLVIFIPSMKDIFGVVGVTSANMLIFILPSSLYLKITNQDGDKNTQRIWAALFLALGVLFSLISIPLVIYDWACSSSNGEGH.

Over 1–74 (MMHFKSGLEL…EYIPGTTSLG (74 aa)) the chain is Cytoplasmic. Position 6 is a phosphoserine (Ser-6). Thr-11 is subject to Phosphothreonine. Phosphoserine is present on residues Ser-25, Ser-28, Ser-49, and Ser-52. Residue Thr-54 is modified to Phosphothreonine. Ser-56 carries the phosphoserine modification. The chain crosses the membrane as a helical span at residues 75-97 (MSVFNLSNAIMGSGILGLAFALA). Residues 98–112 (NTGILLFLILLTSVT) are Extracellular-facing. The chain crosses the membrane as a helical span at residues 113 to 133 (LLSIYSINLLLICSKETGCMV). The Cytoplasmic portion of the chain corresponds to 134–148 (YEKLGEQVFGTTGKL). A helical membrane pass occupies residues 149–169 (VIFGATSLQNTGAMLSYLFIV). The Extracellular portion of the chain corresponds to 170–188 (KNELPSAIKSLMGEEETFS). The helical transmembrane segment at 189-211 (AWYVDGRVLVVMVTFGIILPLCL) threads the bilayer. Over 212-216 (LKNLG) the chain is Cytoplasmic. Residues 217–237 (YLGYTSGFSLSCMVFFLIVVI) form a helical membrane-spanning segment. At 238-273 (YKKFQIPCMNGEQNSTVSANVTDACTPKYVTFNSKT) the chain is on the extracellular side. Residues Cys-245 and Cys-262 are joined by a disulfide bond. N-linked (GlcNAc...) asparagine glycosylation is found at Asn-251 and Asn-257. A helical membrane pass occupies residues 274–294 (VYALPTIAFAFVCHPSVLPIY). The Cytoplasmic portion of the chain corresponds to 295 to 310 (SELKDRSQKKMQMVSN). The chain crosses the membrane as a helical span at residues 311–331 (ISFFAMFVMYFLTAIFGYLTF). At 332–348 (YEKVQSDLLHKYQSTGD) the chain is on the extracellular side. A helical transmembrane segment spans residues 349 to 369 (ILILTVRLAVIVAVILTVPVL). Topologically, residues 370-391 (FFTVRSSLFELAKKTKFHLCRH) are cytoplasmic. A helical membrane pass occupies residues 392 to 412 (VLVTIILLVIINLLVIFIPSM). At 413 to 414 (KD) the chain is on the extracellular side. The chain crosses the membrane as a helical span at residues 415–435 (IFGVVGVTSANMLIFILPSSL). The Cytoplasmic portion of the chain corresponds to 436–450 (YLKITNQDGDKNTQR). Residues 451-471 (IWAALFLALGVLFSLISIPLV) traverse the membrane as a helical segment. Over 472–485 (IYDWACSSSNGEGH) the chain is Extracellular.

It belongs to the amino acid/polyamine transporter 2 family. In terms of processing, N-glycosylation plays an important role in the L-glutamine transport. As to expression, specifically expressed in brain with the highest levels in cerebellum and thalamus (at protein level). Expressed in glutamatergic, GABAergic and a subset of dopaminergic neurons of the substantia nigra and cholinergic motoneurons (at protein level). Also expressed by ependymal cells lining the ventricle (at protein level). Expression is also detected in spinal cord, heart, colon and placenta.

It localises to the cell membrane. The catalysed reaction is L-glutamine(in) + Na(+)(in) = L-glutamine(out) + Na(+)(out). It catalyses the reaction L-alanine(in) + Na(+)(in) = L-alanine(out) + Na(+)(out). It carries out the reaction L-asparagine(in) + Na(+)(in) = L-asparagine(out) + Na(+)(out). The enzyme catalyses L-histidine(in) + Na(+)(in) = L-histidine(out) + Na(+)(out). The catalysed reaction is L-serine(in) + Na(+)(in) = L-serine(out) + Na(+)(out). It catalyses the reaction L-cysteine(in) + Na(+)(in) = L-cysteine(out) + Na(+)(out). It carries out the reaction L-methionine(in) + Na(+)(in) = L-methionine(out) + Na(+)(out). The enzyme catalyses glycine(in) + Na(+)(in) = glycine(out) + Na(+)(out). The catalysed reaction is L-threonine(in) + Na(+)(in) = L-threonine(out) + Na(+)(out). It catalyses the reaction L-proline(in) + Na(+)(in) = L-proline(out) + Na(+)(out). Its activity is regulated as follows. Inhibited by alpha-(methylamino)isobutyric acid (MeAIB). Inhibited by lithium, potassium, choline ions, N-methylglucamine. The pH dependence has an allosteric effect on the transport. Functionally, symporter that cotransports short-chain neutral amino acids and sodium ions from the extraccellular to the intracellular side of the cell membrane. The transport is elctrogenic, pH dependent and driven by the Na(+) electrochemical gradient. Participates in the astroglia-derived glutamine transport into GABAergic interneurons for neurotransmitter GABA de novo synthesis. May also contributes to amino acid transport in placental trophoblast. Regulates synaptic plasticity. In Rattus norvegicus (Rat), this protein is Sodium-coupled neutral amino acid symporter 1.